The following is a 366-amino-acid chain: Chorismate synthase (366 aa).

Arg-48 and Arg-54 together coordinate NADP(+). Residues 125 to 127 (RSS), 238 to 239 (NA), Gly-278, 293 to 297 (KPTSS), and Arg-319 contribute to the FMN site.

It belongs to the chorismate synthase family. In terms of assembly, homotetramer. FMNH2 serves as cofactor.

It carries out the reaction 5-O-(1-carboxyvinyl)-3-phosphoshikimate = chorismate + phosphate. It participates in metabolic intermediate biosynthesis; chorismate biosynthesis; chorismate from D-erythrose 4-phosphate and phosphoenolpyruvate: step 7/7. Functionally, catalyzes the anti-1,4-elimination of the C-3 phosphate and the C-6 proR hydrogen from 5-enolpyruvylshikimate-3-phosphate (EPSP) to yield chorismate, which is the branch point compound that serves as the starting substrate for the three terminal pathways of aromatic amino acid biosynthesis. This reaction introduces a second double bond into the aromatic ring system. This Burkholderia vietnamiensis (strain G4 / LMG 22486) (Burkholderia cepacia (strain R1808)) protein is Chorismate synthase.